A 199-amino-acid chain; its full sequence is ATP-dependent Clp protease proteolytic subunit (199 aa).

The Nucleophile role is filled by Ser-97. Residue His-122 is part of the active site.

This sequence belongs to the peptidase S14 family. Fourteen ClpP subunits assemble into 2 heptameric rings which stack back to back to give a disk-like structure with a central cavity, resembling the structure of eukaryotic proteasomes.

It is found in the cytoplasm. It catalyses the reaction Hydrolysis of proteins to small peptides in the presence of ATP and magnesium. alpha-casein is the usual test substrate. In the absence of ATP, only oligopeptides shorter than five residues are hydrolyzed (such as succinyl-Leu-Tyr-|-NHMec, and Leu-Tyr-Leu-|-Tyr-Trp, in which cleavage of the -Tyr-|-Leu- and -Tyr-|-Trp bonds also occurs).. Functionally, cleaves peptides in various proteins in a process that requires ATP hydrolysis. Has a chymotrypsin-like activity. Plays a major role in the degradation of misfolded proteins. This Citrifermentans bemidjiense (strain ATCC BAA-1014 / DSM 16622 / JCM 12645 / Bem) (Geobacter bemidjiensis) protein is ATP-dependent Clp protease proteolytic subunit.